The primary structure comprises 317 residues: Putative 12-oxophytodienoate reductase 10 (317 aa).

Residue 26–28 (PVG) coordinates FMN. 117–120 (HGAN) contacts substrate. Y122 functions as the Proton donor in the catalytic mechanism. R169 contributes to the FMN binding site. Residue R209 participates in substrate binding. FMN-binding positions include G244 and 265-266 (GR).

The protein belongs to the NADH:flavin oxidoreductase/NADH oxidase family. FMN serves as cofactor.

Its function is as follows. Putative oxophytodienoate reductase that may be involved in the biosynthesis or metabolism of oxylipin signaling molecules. In Oryza sativa subsp. japonica (Rice), this protein is Putative 12-oxophytodienoate reductase 10 (OPR10).